Reading from the N-terminus, the 50-residue chain is MQTLSSAPDPAVSVAVTILAILLALTGFGLWTAFGPKAAKLTDPWDEHDD.

Residues 14 to 34 (VAVTILAILLALTGFGLWTAF) traverse the membrane as a helical segment.

The protein belongs to the PsbN family.

The protein resides in the cellular thylakoid membrane. Its function is as follows. May play a role in photosystem I and II biogenesis. In Prochlorococcus marinus (strain MIT 9312), this protein is Protein PsbN.